A 352-amino-acid polypeptide reads, in one-letter code: Protein NDRG4 (352 aa).

3 positions are modified to phosphoserine: Ser-298, Ser-317, and Ser-323. Residues 301 to 352 are disordered; that stretch reads AVPSASMTRLARSRTASLTSASSVDGSRPQPCTHSDSSEGMGQVNHTMEVSC. Positions 308-323 are enriched in low complexity; that stretch reads TRLARSRTASLTSASS. The span at 330-352 shows a compositional bias: polar residues; that stretch reads QPCTHSDSSEGMGQVNHTMEVSC.

The protein belongs to the NDRG family. Expressed in the brain and heart, weakly in the kidney; most prominently in postnatal brain where it is expressed widely in the olfactory bulb, cerebral cortex, hippocampus, cerebellum, thalamus, and medulla oblongata.

The protein localises to the cytoplasm. It localises to the cytosol. In terms of biological role, contributes to the maintenance of intracerebral BDNF levels within the normal range, which is necessary for the preservation of spatial learning and the resistance to neuronal cell death caused by ischemic stress. May enhance growth factor-induced ERK1 and ERK2 phosphorylation, including that induced by NGF. May attenuate NGF-promoted ELK1 phosphorylation in a microtubule-dependent manner. The sequence is that of Protein NDRG4 (Ndrg4) from Rattus norvegicus (Rat).